A 411-amino-acid polypeptide reads, in one-letter code: Protein PHLOEM PROTEIN 2-LIKE A5 (411 aa).

A TIR domain is found at 20–157; it reads TGPQVFINFR…KWTEALFSVC (138 aa). Residue Glu-94 is part of the active site.

The enzyme catalyses NAD(+) + H2O = ADP-D-ribose + nicotinamide + H(+). The protein is Protein PHLOEM PROTEIN 2-LIKE A5 (PP2A5) of Arabidopsis thaliana (Mouse-ear cress).